Consider the following 123-residue polypeptide: Large ribosomal subunit protein bL12 (123 aa).

The protein belongs to the bacterial ribosomal protein bL12 family. Homodimer. Part of the ribosomal stalk of the 50S ribosomal subunit. Forms a multimeric L10(L12)X complex, where L10 forms an elongated spine to which 2 to 4 L12 dimers bind in a sequential fashion. Binds GTP-bound translation factors.

Forms part of the ribosomal stalk which helps the ribosome interact with GTP-bound translation factors. Is thus essential for accurate translation. The protein is Large ribosomal subunit protein bL12 of Geobacillus kaustophilus (strain HTA426).